The sequence spans 518 residues: Triacylglycerol lipase OBL1 (518 aa).

A helical membrane pass occupies residues 93–113 (GFVVDFFLNLFSANGGFFGLL). The GXSXG motif lies at 337-341 (GHSLG). S339 functions as the Nucleophile in the catalytic mechanism. Active-site charge relay system residues include D403 and H496.

Belongs to the AB hydrolase superfamily. Lipase family. In terms of tissue distribution, expressed in pollen grains, pollen tubes, developing embryos, developing seeds and germinating seeds.

It localises to the lipid droplet. The protein localises to the membrane. It carries out the reaction 1,2-di-(9Z-octadecenoyl)-glycerol + (9Z)-octadecenoate + H(+) = 1,2,3-tri-(9Z-octadecenoyl)-glycerol + H2O. It catalyses the reaction 1-(9Z-octadecenoyl)-glycerol + H2O = glycerol + (9Z)-octadecenoate + H(+). Functionally, acid lipase that can hydrolyze a range of triacylglycerols without a clear preference for acyl-chains. Can also cleave 1,2-diacylglycerol, 1,3-diacylglycerol and 1-monoacylglycerol, but not phosphatidylcholine, phosphatidylethanolamine, or sterol esters. Required for pollen tube growth. Triacylglycerol hydrolysis by OBL1 may provide acyl groups for the synthesis of membrane lipids in growing pollen tubes. This Arabidopsis thaliana (Mouse-ear cress) protein is Triacylglycerol lipase OBL1.